Consider the following 378-residue polypeptide: Cysteine endopeptidase RepA (378 aa).

A signal peptide spans 1-24 (MLRCFLVAAAAVALAAAAAAPARA). Positions 25 to 141 (IPFTESDLSS…SFRYGGDDED (117 aa)) are cleaved as a propeptide — activation peptide. Cystine bridges form between Cys-164–Cys-206, Cys-198–Cys-239, and Cys-297–Cys-350. Cys-167 is a catalytic residue. Catalysis depends on residues His-303 and Asn-324.

This sequence belongs to the peptidase C1 family.

It is found in the protein storage vacuole. Cysteine endopeptidase that digests in vitro both the acidic and basic subunits of glutelin, the major seed storage protein of rice. The sequence is that of Cysteine endopeptidase RepA from Oryza sativa subsp. japonica (Rice).